A 640-amino-acid polypeptide reads, in one-letter code: Scarecrow-like protein 27 (640 aa).

Low complexity-rich tracts occupy residues 68-79 and 86-98; these read SYSSTTTTLSSS and TVTN…GDDN. The disordered stretch occupies residues 68–98; sequence SYSSTTTTLSSSHGGGGTTVTNTTVTAGDDN. The GRAS domain maps to 259 to 639; the sequence is GMAGDDQSVI…KELVTVSAWK (381 aa). The tract at residues 266–331 is leucine repeat I (LRI); it reads SVIIEQLFNA…AEALLSLIHN (66 aa). A VHIID region spans residues 350 to 422; that stretch reads YRSFSETSPF…NRASSLKLTV (73 aa). A VHIID motif is present at residues 383–387; it reads IHIID. The tract at residues 438–470 is leucine repeat II (LRII); it reads FTEENLKTFAGEVKIPFEIELLSVELLLNPAYW. The PFYRE stretch occupies residues 480–565; that stretch reads EAIAVNLPVN…RFWVQPSIEK (86 aa). An SAW region spans residues 568-639; sequence MKRHRWIERS…KELVTVSAWK (72 aa).

This sequence belongs to the GRAS family. As to expression, expressed in seedlings, roots, cotyledons, leaves and flowers.

It localises to the nucleus. Probable transcription factor involved in plant development. The polypeptide is Scarecrow-like protein 27 (SCL27) (Arabidopsis thaliana (Mouse-ear cress)).